A 119-amino-acid chain; its full sequence is Holo-[acyl-carrier-protein] synthase (119 aa).

Mg(2+)-binding residues include Asp-8 and Glu-58.

The protein belongs to the P-Pant transferase superfamily. AcpS family. The cofactor is Mg(2+).

The protein localises to the cytoplasm. It carries out the reaction apo-[ACP] + CoA = holo-[ACP] + adenosine 3',5'-bisphosphate + H(+). In terms of biological role, transfers the 4'-phosphopantetheine moiety from coenzyme A to a Ser of acyl-carrier-protein. This chain is Holo-[acyl-carrier-protein] synthase, found in Lactobacillus johnsonii (strain CNCM I-12250 / La1 / NCC 533).